Here is a 331-residue protein sequence, read N- to C-terminus: 6-phosphogluconolactonase (331 aa).

This sequence belongs to the cycloisomerase 2 family.

The catalysed reaction is 6-phospho-D-glucono-1,5-lactone + H2O = 6-phospho-D-gluconate + H(+). Its pathway is carbohydrate degradation; pentose phosphate pathway; D-ribulose 5-phosphate from D-glucose 6-phosphate (oxidative stage): step 2/3. Its function is as follows. Catalyzes the hydrolysis of 6-phosphogluconolactone to 6-phosphogluconate. This is 6-phosphogluconolactonase from Salmonella paratyphi B (strain ATCC BAA-1250 / SPB7).